Here is a 207-residue protein sequence, read N- to C-terminus: NAD--protein ADP-ribosyltransferase modB (207 aa).

Position 73 (Arg-73) interacts with NAD(+). Glu-173 is an active-site residue.

Belongs to the Tevenvirinae NAD--protein ADP-ribosyltransferase modA family.

It localises to the virion. The enzyme catalyses L-arginyl-[protein] + NAD(+) = N(omega)-(ADP-D-ribosyl)-L-arginyl-[protein] + nicotinamide + H(+). ADP-ribosyltransferase that regulates transcription by ADP-ribosylation of host ribosomal protein S1. Additional identified targets include proteins involved in either translation or cellular metabolism such as elongation factor-Tu or trigger factor. Also reprograms the host's gene-expression system by RNAylating host ribosomal protein S1. ModB can attach NAD-capped RNAs to target proteins post-transcriptionally resulting in covalent RNA-protein conjugates. The sequence is that of NAD--protein ADP-ribosyltransferase modB from Enterobacteria phage T4 (Bacteriophage T4).